We begin with the raw amino-acid sequence, 275 residues long: Glucosamine-6-phosphate deaminase 2 (275 aa).

Aspartate 72 (proton acceptor; for enolization step) is an active-site residue. Residues 102–131 adopt a coiled-coil conformation; that stretch reads NNAHILDGNASDLQAECEDFERKIKEAGGI. The active-site For ring-opening step is aspartate 141. Histidine 143 (proton acceptor; for ring-opening step) is an active-site residue. Glutamate 148 serves as the catalytic For ring-opening step.

It belongs to the glucosamine/galactosamine-6-phosphate isomerase family. Homohexamer.

Its subcellular location is the cytoplasm. It catalyses the reaction alpha-D-glucosamine 6-phosphate + H2O = beta-D-fructose 6-phosphate + NH4(+). In terms of biological role, catalyzes the reversible conversion of alpha-D-glucosamine 6-phosphate (GlcN-6P) into beta-D-fructose 6-phosphate (Fru-6P) and ammonium ion, a regulatory reaction step in de novo uridine diphosphate-N-acetyl-alpha-D-glucosamine (UDP-GlcNAc) biosynthesis via hexosamine pathway. This Xenopus laevis (African clawed frog) protein is Glucosamine-6-phosphate deaminase 2.